The sequence spans 106 residues: Integration host factor subunit beta (106 aa).

Positions 57–106 (PARAGRNPRTGEHVPVEQKSVPFFKTGKEMRERLNRDGLDGATPPSPPAA) are disordered. Positions 82–95 (TGKEMRERLNRDGL) are enriched in basic and acidic residues.

It belongs to the bacterial histone-like protein family. Heterodimer of an alpha and a beta chain.

In terms of biological role, this protein is one of the two subunits of integration host factor, a specific DNA-binding protein that functions in genetic recombination as well as in transcriptional and translational control. This chain is Integration host factor subunit beta, found in Afipia carboxidovorans (strain ATCC 49405 / DSM 1227 / KCTC 32145 / OM5) (Oligotropha carboxidovorans).